The chain runs to 688 residues: MDFITINSINKTEEFALKQVAKQATSSLLYRLGKTIILASVCVERELVSEDFLPLVVQFLEKSYAAGKIPGGFVKREGRAQDFEILTSRLIDRTLRPLFPKDYRYPTQITLMVLSHDIENDLQVSALNAASAALFLAHAAPFKSVSACRIARIDNEFIINPSTSLLNQSSLDLFVSGTKESLNMIEMRSLGQKLNALEEPLMLEALELAQKSLKETCTLYEETFTPHQNALLFKESQGIVFNERLLDLLKNQYFNEIIKGIESSALSERENVFNEIARKISEAHSEFNLEEIELSLEKVKKTEIRRMIIRDKIRPDKRALEEVRPISIESNLLPMAHSSILFTRGQTQSLVVGVLGTDNDAQTHESLEHKAPIKERFMFHYNFPPFCVGEASSIGATSRRELGHGNLAKRALETSIKNKDQVIRLVSEILESNGSSSMASVCAGSLALYASGVEIHDLVAGVAMGMVSEGQDYAILSDISGLEDAEGDMDFKIAGNLEGITAMQMDTKMSGIQLEILYQTLLQAKRVREHILKIMHEAKEKIVINFSHLPTTEIFNVAPDKIIEIIGQGGRVIREIVEKFEVKIDLNKPSGEVKIMGNKERVLKTKEFILNYLHSLDQELEQYAIDEVLEAQVKRIVDFGAFLSLPKGGEGLLRKQHMERCQVALKEGDSIRCRVISFNKGKIALDLA.

2 residues coordinate Mg(2+): Asp484 and Asp490. The region spanning 550–609 is the KH domain; the sequence is PTTEIFNVAPDKIIEIIGQGGRVIREIVEKFEVKIDLNKPSGEVKIMGNKERVLKTKEFI. Residues 626–688 enclose the S1 motif domain; sequence DEVLEAQVKR…NKGKIALDLA (63 aa).

The protein belongs to the polyribonucleotide nucleotidyltransferase family. Mg(2+) is required as a cofactor.

It is found in the cytoplasm. It carries out the reaction RNA(n+1) + phosphate = RNA(n) + a ribonucleoside 5'-diphosphate. Involved in mRNA degradation. Catalyzes the phosphorolysis of single-stranded polyribonucleotides processively in the 3'- to 5'-direction. The chain is Polyribonucleotide nucleotidyltransferase from Helicobacter acinonychis (strain Sheeba).